The chain runs to 414 residues: 3-phosphoshikimate 1-carboxyvinyltransferase (414 aa).

3-phosphoshikimate contacts are provided by Lys-20, Ser-21, and Arg-25. Lys-20 contributes to the phosphoenolpyruvate binding site. Position 113 (Arg-113) interacts with phosphoenolpyruvate. Positions 154, 155, 156, 181, 296, and 323 each coordinate 3-phosphoshikimate. A phosphoenolpyruvate-binding site is contributed by Gln-156. Catalysis depends on Asp-296, which acts as the Proton acceptor. The phosphoenolpyruvate site is built by Arg-327, Arg-371, and Lys-395.

Belongs to the EPSP synthase family. In terms of assembly, monomer.

It is found in the cytoplasm. It catalyses the reaction 3-phosphoshikimate + phosphoenolpyruvate = 5-O-(1-carboxyvinyl)-3-phosphoshikimate + phosphate. It participates in metabolic intermediate biosynthesis; chorismate biosynthesis. Its function is as follows. Catalyzes the transfer of the enolpyruvyl moiety of phosphoenolpyruvate (PEP) to the 5-hydroxyl of shikimate-3-phosphate (S3P) to produce enolpyruvyl shikimate-3-phosphate and inorganic phosphate. This is 3-phosphoshikimate 1-carboxyvinyltransferase from Saccharolobus solfataricus (strain ATCC 35092 / DSM 1617 / JCM 11322 / P2) (Sulfolobus solfataricus).